A 25-amino-acid polypeptide reads, in one-letter code: Ocellatin-P1 (25 aa).

Residue Leu-25 is modified to Leucine amide.

In terms of tissue distribution, expressed by the skin glands.

It localises to the secreted. In terms of biological role, antibacterial peptide that inhibits reference strains of both Gram-negative bacteria (E.coli, E.cloacae, K.pneumoniae, P.aeruginosa) and Gram-positive bacteria (S.aureus, S.epidermidis, E.faecalis, Streptococcus group B) with relatively low potencies (MIC=25-200 uM). The peptide shows very low hemolytic activity against human erythrocytes. Wheel projection demonstrates the amphipathicity of the alpha-helices is low which may explain the low antibacterial potency. This is Ocellatin-P1 from Leptodactylus pentadactylus (Smokey jungle frog).